A 306-amino-acid chain; its full sequence is Ribonuclease BN (306 aa).

Residues His-64, His-66, Asp-68, His-69, His-141, Asp-212, and His-270 each coordinate Zn(2+). Asp-68 functions as the Proton acceptor in the catalytic mechanism.

It belongs to the RNase Z family. RNase BN subfamily. As to quaternary structure, homodimer. Zn(2+) serves as cofactor.

Its function is as follows. Zinc phosphodiesterase, which has both exoribonuclease and endoribonuclease activities. The sequence is that of Ribonuclease BN from Klebsiella pneumoniae (strain 342).